Here is a 775-residue protein sequence, read N- to C-terminus: tRNA(Met) cytidine acetyltransferase TmcA (775 aa).

2 disordered regions span residues 1–33 (MPTT…GMDI) and 191–215 (TVEQ…PTDA). Residues 199 to 212 (DPPPSRPVPSPTPP) show a composition bias toward pro residues. Residues Gln230, 254–263 (GRGKSSAAGL), and Arg403 each bind ATP. An N-acetyltransferase domain is found at 438 to 623 (VEYRQLSAAD…YSVVMLDPCS (186 aa)). Residues 549–551 (IAT), 556–562 (RSRGLGS), and Glu588 contribute to the acetyl-CoA site.

Belongs to the RNA cytidine acetyltransferase family. TmcA subfamily.

It is found in the cytoplasm. The enzyme catalyses cytidine(34) in elongator tRNA(Met) + acetyl-CoA + ATP + H2O = N(4)-acetylcytidine(34) in elongator tRNA(Met) + ADP + phosphate + CoA + H(+). In terms of biological role, catalyzes the formation of N(4)-acetylcytidine (ac(4)C) at the wobble position of tRNA(Met), by using acetyl-CoA as an acetyl donor and ATP (or GTP). In Haloarcula marismortui (strain ATCC 43049 / DSM 3752 / JCM 8966 / VKM B-1809) (Halobacterium marismortui), this protein is tRNA(Met) cytidine acetyltransferase TmcA.